The primary structure comprises 439 residues: Tol-Pal system protein TolB (439 aa).

Residues 1–22 (MKKPLRWLAALTALLLPLSAFA) form the signal peptide.

Belongs to the TolB family. In terms of assembly, the Tol-Pal system is composed of five core proteins: the inner membrane proteins TolA, TolQ and TolR, the periplasmic protein TolB and the outer membrane protein Pal. They form a network linking the inner and outer membranes and the peptidoglycan layer.

Its subcellular location is the periplasm. Its function is as follows. Part of the Tol-Pal system, which plays a role in outer membrane invagination during cell division and is important for maintaining outer membrane integrity. This is Tol-Pal system protein TolB from Xanthomonas campestris pv. campestris (strain 8004).